The chain runs to 318 residues: UAP56-interacting factor (318 aa).

An N-acetylmethionine modification is found at Met-1. Positions 1–25 (MNRFGTRLVGATATSSPPPKARSNE) are disordered. A Phosphothreonine modification is found at Thr-14. Phosphoserine occurs at positions 16 and 23. The UAP56-binding motif motif lies at 26-44 (NLDKIDMSLDDIIKLNRKE). A Phosphoserine modification is found at Ser-61. The segment at 79 to 100 (GFGKTSLNRRGRVMPGKRRPNG) is disordered. A compositionally biased stretch (basic residues) spans 85–98 (LNRRGRVMPGKRRP). Phosphoserine is present on Ser-118. A Glycyl lysine isopeptide (Lys-Gly) (interchain with G-Cter in SUMO1) cross-link involves residue Lys-140. Lys-261 is covalently cross-linked (Glycyl lysine isopeptide (Lys-Gly) (interchain with G-Cter in SUMO2)).

Belongs to the UIF family. In terms of assembly, interacts with CHTOP. Interacts with DDX39B/UAP56 and NXF1; interaction with DDX39B/UAP56 and NXF1 are mutually exclusive. Interacts with SSRP1; required for its recruitment to mRNAs. As to expression, expressed in a wide variety of cancer types.

It is found in the nucleus. The protein localises to the nucleoplasm. Its subcellular location is the nucleus speckle. Its function is as follows. Required for mRNA export from the nucleus to the cytoplasm. Acts as an adapter that uses the DDX39B/UAP56-NFX1 pathway to ensure efficient mRNA export and delivering to the nuclear pore. Associates with spliced and unspliced mRNAs simultaneously with ALYREF/THOC4. In Homo sapiens (Human), this protein is UAP56-interacting factor (FYTTD1).